Here is a 211-residue protein sequence, read N- to C-terminus: Thymidylate kinase (211 aa).

10 to 17 (GVEGCGKT) serves as a coordination point for ATP.

Belongs to the thymidylate kinase family.

It catalyses the reaction dTMP + ATP = dTDP + ADP. Its function is as follows. Phosphorylation of dTMP to form dTDP in both de novo and salvage pathways of dTTP synthesis. The protein is Thymidylate kinase of Nostoc sp. (strain PCC 7120 / SAG 25.82 / UTEX 2576).